A 297-amino-acid chain; its full sequence is D-aminoacyl-tRNA deacylase (297 aa).

It belongs to the DtdA deacylase family. In terms of assembly, monomer. Zn(2+) serves as cofactor.

It catalyses the reaction a D-aminoacyl-tRNA + H2O = a tRNA + a D-alpha-amino acid + H(+). The catalysed reaction is glycyl-tRNA(Ala) + H2O = tRNA(Ala) + glycine + H(+). In terms of biological role, D-aminoacyl-tRNA deacylase with broad substrate specificity. By recycling D-aminoacyl-tRNA to D-amino acids and free tRNA molecules, this enzyme counteracts the toxicity associated with the formation of D-aminoacyl-tRNA entities in vivo. The protein is D-aminoacyl-tRNA deacylase of Methanosarcina mazei (strain ATCC BAA-159 / DSM 3647 / Goe1 / Go1 / JCM 11833 / OCM 88) (Methanosarcina frisia).